The primary structure comprises 140 residues: MNPAHLLVLAAVCISLSGASSIAPQPLNLIQFGNMIQCNNTRPSLDFSGYGCYCGRGGSGTPVDELDRCCQVHDNCYGEAETVHECDPYWTFYSYECSEGKLTCKDNNTKCKEFVCNCDREAANCFAKAPYIDSNYKNCK.

The first 21 residues, 1-21, serve as a signal peptide directing secretion; the sequence is MNPAHLLVLAAVCISLSGASS. Positions 22-27 are excised as a propeptide; sequence IAPQPL. 7 cysteine pairs are disulfide-bonded: Cys38-Cys97, Cys52-Cys139, Cys54-Cys70, Cys69-Cys125, Cys76-Cys118, Cys86-Cys111, and Cys104-Cys116. Asn39 carries an N-linked (GlcNAc...) asparagine glycan. The Ca(2+) site is built by Tyr53, Gly55, and Gly57. The active site involves His73. Position 74 (Asp74) interacts with Ca(2+). N-linked (GlcNAc...) asparagine glycosylation is present at Asn107. The active site involves Asp119.

The protein belongs to the phospholipase A2 family. Group I subfamily. D49 sub-subfamily. Ca(2+) is required as a cofactor. As to expression, expressed by the venom gland.

It is found in the secreted. It carries out the reaction a 1,2-diacyl-sn-glycero-3-phosphocholine + H2O = a 1-acyl-sn-glycero-3-phosphocholine + a fatty acid + H(+). Functionally, PLA2 catalyzes the calcium-dependent hydrolysis of the 2-acyl groups in 3-sn-phosphoglycerides. The protein is Phospholipase A2 of Micrurus altirostris (Uruguayan coral snake).